The sequence spans 312 residues: Elongation factor Ts (312 aa).

Residues T84–L87 are involved in Mg(2+) ion dislocation from EF-Tu.

It belongs to the EF-Ts family.

The protein resides in the cytoplasm. Associates with the EF-Tu.GDP complex and induces the exchange of GDP to GTP. It remains bound to the aminoacyl-tRNA.EF-Tu.GTP complex up to the GTP hydrolysis stage on the ribosome. The chain is Elongation factor Ts from Caulobacter sp. (strain K31).